Consider the following 204-residue polypeptide: Guanylate kinase (204 aa).

One can recognise a Guanylate kinase-like domain in the interval 18–196 (PKLFTISAPA…SYEVLKSIFI (179 aa)). 25–32 (APAGAGKT) contacts ATP.

It belongs to the guanylate kinase family.

It is found in the cytoplasm. It carries out the reaction GMP + ATP = GDP + ADP. Its function is as follows. Essential for recycling GMP and indirectly, cGMP. The polypeptide is Guanylate kinase (Chlamydia abortus (strain DSM 27085 / S26/3) (Chlamydophila abortus)).